A 291-amino-acid chain; its full sequence is Glycine--tRNA ligase alpha subunit (291 aa).

Belongs to the class-II aminoacyl-tRNA synthetase family. Tetramer of two alpha and two beta subunits.

The protein resides in the cytoplasm. It carries out the reaction tRNA(Gly) + glycine + ATP = glycyl-tRNA(Gly) + AMP + diphosphate. The chain is Glycine--tRNA ligase alpha subunit from Coprothermobacter proteolyticus (strain ATCC 35245 / DSM 5265 / OCM 4 / BT).